The chain runs to 496 residues: Probable cytosol aminopeptidase (496 aa).

Residues Lys266 and Asp271 each contribute to the Mn(2+) site. Residue Lys278 is part of the active site. Residues Asp289, Asp348, and Glu350 each coordinate Mn(2+). Residue Arg352 is part of the active site.

Belongs to the peptidase M17 family. The cofactor is Mn(2+).

The protein resides in the cytoplasm. The enzyme catalyses Release of an N-terminal amino acid, Xaa-|-Yaa-, in which Xaa is preferably Leu, but may be other amino acids including Pro although not Arg or Lys, and Yaa may be Pro. Amino acid amides and methyl esters are also readily hydrolyzed, but rates on arylamides are exceedingly low.. It catalyses the reaction Release of an N-terminal amino acid, preferentially leucine, but not glutamic or aspartic acids.. Its function is as follows. Presumably involved in the processing and regular turnover of intracellular proteins. Catalyzes the removal of unsubstituted N-terminal amino acids from various peptides. In Pseudomonas fluorescens (strain SBW25), this protein is Probable cytosol aminopeptidase.